A 611-amino-acid chain; its full sequence is Adenosylhomocysteinase 3 (611 aa).

3 stretches are compositionally biased toward low complexity: residues 1–14, 40–57, and 68–78; these read MSVQ…AAKV, AMAP…APAA, and GPAAALSPAAG. The tract at residues 1–184 is disordered; sequence MSVQVVSAAA…KQQKNSKGNS (184 aa). S2 is subject to N-acetylserine. An LISN domain, inhibits interaction with ITPR1 region spans residues 2–109; it reads SVQVVSAAAA…DGGEALVSPD (108 aa). At S107 the chain carries Phosphoserine. Residues 135–144 show a composition bias toward basic residues; sequence RPTKIGRRSL. Residues 145-164 show a composition bias toward low complexity; that stretch reads SRSISQSSTDSYSSAASYTD. Phosphoserine is present on residues S149, S152, S155, and S158. Residues T236, D310, and E335 each coordinate substrate. 336 to 338 serves as a coordination point for NAD(+); sequence SVT. Substrate-binding residues include K365 and D369. Residues N370, 401–406, E422, N457, 478–479, and N525 each bind NAD(+); these read GEVGKG and MG.

It belongs to the adenosylhomocysteinase family. Homotetramer. Forms heteromultimers with AHCYL1 (via the C-terminal region). Interacts with ITPR1; with lower affinity than AHCYL1 and maybe via ITPR1. Interacts with SLC4A4. Interacts with ZCCHC4. Requires NAD(+) as cofactor. In terms of processing, phosphorylated during neuronal differentiation at the LISN domain. Expressed in parotid and acinar cells (at protein level).

The protein resides in the cytoplasm. It localises to the microsome. The catalysed reaction is S-adenosyl-L-homocysteine + H2O = L-homocysteine + adenosine. It participates in amino-acid biosynthesis; L-homocysteine biosynthesis; L-homocysteine from S-adenosyl-L-homocysteine: step 1/1. In terms of biological role, may regulate the electrogenic sodium/bicarbonate cotransporter SLC4A4 activity and Mg(2+)-sensitivity. On the contrary of its homolog AHCYL1, does not regulate ITPR1 sensitivity to inositol 1,4,5-trisphosphate. The chain is Adenosylhomocysteinase 3 from Bos taurus (Bovine).